Consider the following 156-residue polypeptide: MNPGSAPWERRTRERMRAMSRKNGEWGDVRVGGVPGLSARVRPLPGAAGADTQPDWIDVTVMPREEPAAASRRRTSPRPPVRSRAEVHQAGLAESAQFHQSLMRWLEAHHLLGAVRSVSEPGSMPMLHLRCAPRVLDQLRRAPEFEAGTMMPLDLI.

A disordered region spans residues 1–89; it reads MNPGSAPWER…PVRSRAEVHQ (89 aa). The segment covering 8-28 has biased composition (basic and acidic residues); that stretch reads WERRTRERMRAMSRKNGEWGD.

In terms of assembly, interacts with PopC in non-starving cells.

The protein resides in the cytoplasm. Its activity is regulated as follows. In response to starvation, RelA is activated resulting in the accumulation of (p)ppGpp, which causes the degradation of PopD in an FtsH(D)-dependent manner, thereby releasing pre-formed PopC for secretion. In terms of biological role, inhibitor of protease PopC. In non-starving cells, forms a cytoplasmic complex with PopC and inhibits PopC secretion and activity. The chain is PopC secretion inhibitor from Myxococcus xanthus (strain DK1622).